The primary structure comprises 137 residues: Large ribosomal subunit protein uL16 (137 aa).

The protein belongs to the universal ribosomal protein uL16 family. As to quaternary structure, part of the 50S ribosomal subunit.

In terms of biological role, binds 23S rRNA and is also seen to make contacts with the A and possibly P site tRNAs. The chain is Large ribosomal subunit protein uL16 from Lawsonia intracellularis (strain PHE/MN1-00).